A 407-amino-acid polypeptide reads, in one-letter code: Phosphopentomutase (407 aa).

Residues Asp-10, Asp-306, His-311, Asp-347, His-348, and His-359 each coordinate Mn(2+).

Belongs to the phosphopentomutase family. Mn(2+) serves as cofactor.

It localises to the cytoplasm. It carries out the reaction 2-deoxy-alpha-D-ribose 1-phosphate = 2-deoxy-D-ribose 5-phosphate. It catalyses the reaction alpha-D-ribose 1-phosphate = D-ribose 5-phosphate. It participates in carbohydrate degradation; 2-deoxy-D-ribose 1-phosphate degradation; D-glyceraldehyde 3-phosphate and acetaldehyde from 2-deoxy-alpha-D-ribose 1-phosphate: step 1/2. Isomerase that catalyzes the conversion of deoxy-ribose 1-phosphate (dRib-1-P) and ribose 1-phosphate (Rib-1-P) to deoxy-ribose 5-phosphate (dRib-5-P) and ribose 5-phosphate (Rib-5-P), respectively. The sequence is that of Phosphopentomutase from Cronobacter sakazakii (strain ATCC BAA-894) (Enterobacter sakazakii).